The chain runs to 213 residues: Thiamine-phosphate synthase (213 aa).

4-amino-2-methyl-5-(diphosphooxymethyl)pyrimidine contacts are provided by residues 43–47 (QLRDK) and Asn74. Residues Asp75 and Asp94 each coordinate Mg(2+). Residue Ser113 participates in 4-amino-2-methyl-5-(diphosphooxymethyl)pyrimidine binding. A 2-[(2R,5Z)-2-carboxy-4-methylthiazol-5(2H)-ylidene]ethyl phosphate-binding site is contributed by 142 to 144 (TAT). 4-amino-2-methyl-5-(diphosphooxymethyl)pyrimidine is bound at residue Lys145. 2-[(2R,5Z)-2-carboxy-4-methylthiazol-5(2H)-ylidene]ethyl phosphate-binding positions include Gly173 and 193–194 (VS).

Belongs to the thiamine-phosphate synthase family. The cofactor is Mg(2+).

The catalysed reaction is 2-[(2R,5Z)-2-carboxy-4-methylthiazol-5(2H)-ylidene]ethyl phosphate + 4-amino-2-methyl-5-(diphosphooxymethyl)pyrimidine + 2 H(+) = thiamine phosphate + CO2 + diphosphate. It catalyses the reaction 2-(2-carboxy-4-methylthiazol-5-yl)ethyl phosphate + 4-amino-2-methyl-5-(diphosphooxymethyl)pyrimidine + 2 H(+) = thiamine phosphate + CO2 + diphosphate. The enzyme catalyses 4-methyl-5-(2-phosphooxyethyl)-thiazole + 4-amino-2-methyl-5-(diphosphooxymethyl)pyrimidine + H(+) = thiamine phosphate + diphosphate. It participates in cofactor biosynthesis; thiamine diphosphate biosynthesis; thiamine phosphate from 4-amino-2-methyl-5-diphosphomethylpyrimidine and 4-methyl-5-(2-phosphoethyl)-thiazole: step 1/1. In terms of biological role, condenses 4-methyl-5-(beta-hydroxyethyl)thiazole monophosphate (THZ-P) and 2-methyl-4-amino-5-hydroxymethyl pyrimidine pyrophosphate (HMP-PP) to form thiamine monophosphate (TMP). The sequence is that of Thiamine-phosphate synthase from Psychrobacter sp. (strain PRwf-1).